The sequence spans 592 residues: UvrABC system protein C (592 aa).

One can recognise a GIY-YIG domain in the interval 15–92 (ALPGCYLMKD…IQKHQPYFNI (78 aa)). A UVR domain is found at 197–232 (DNVKKDLTEKMATAAQEMQFERAAELRDQLRYIEAT).

This sequence belongs to the UvrC family. Interacts with UvrB in an incision complex.

The protein resides in the cytoplasm. The UvrABC repair system catalyzes the recognition and processing of DNA lesions. UvrC both incises the 5' and 3' sides of the lesion. The N-terminal half is responsible for the 3' incision and the C-terminal half is responsible for the 5' incision. The polypeptide is UvrABC system protein C (Latilactobacillus sakei subsp. sakei (strain 23K) (Lactobacillus sakei subsp. sakei)).